Here is a 63-residue protein sequence, read N- to C-terminus: UPF0337 protein SERP0494 (63 aa).

The segment at 1-46 is disordered; that stretch reads MAEDKFEQAKGNIKETVGNATDNKELEKDGKGDKASGKAKEAVENV. Positions 22-46 are enriched in basic and acidic residues; the sequence is DNKELEKDGKGDKASGKAKEAVENV.

This sequence belongs to the UPF0337 (CsbD) family.

The polypeptide is UPF0337 protein SERP0494 (Staphylococcus epidermidis (strain ATCC 35984 / DSM 28319 / BCRC 17069 / CCUG 31568 / BM 3577 / RP62A)).